Reading from the N-terminus, the 520-residue chain is Ribonuclease Y (520 aa).

The helical transmembrane segment at 3-23 threads the bilayer; that stretch reads IEIAIVLILAAAGLGYFVGNM. The region spanning 210–273 is the KH domain; that stretch reads SVSVVALPSD…EVAKIALEKL (64 aa). Residues 336 to 429 form the HD domain; that stretch reads VYQHSLEVAF…VQAADALSGA (94 aa).

It belongs to the RNase Y family.

It localises to the cell membrane. Functionally, endoribonuclease that initiates mRNA decay. This chain is Ribonuclease Y, found in Geobacter metallireducens (strain ATCC 53774 / DSM 7210 / GS-15).